The following is a 360-amino-acid chain: MQFTALLAALGAPLALAASIPAAAHNHTMIDVQLAATGNSMIKATITNTGDRTLNLLKFNTIMDEHPTRKVMVYQDGAEVQFTGMLPRYKMSDLTPEYFVNLGPKASVEHSFDLAATHDLSRGGKITVKAHGMVPTAEENATTITGHTLYESNELTMDVDGKQAAAVEQAMGGDDSTGVIDKRSNIVTSSCRGSQLRVLQTALSNASRLSRAAASAAQRNPSKMREYFKTADKPHRPEGASRFLSVARESSSGSTGRTTYYCNDNRGGCHPGVLAYTLPSRNQVFNCPSYYQLPALNNRCHGQDQATTTLHELTHNPAVVTPFCEDLGYGYQRVSALPASKAIQNADTYSLFANAIYLGC.

A signal peptide spans 1-17 (MQFTALLAALGAPLALA). Positions 18–183 (ASIPAAAHNH…DDSTGVIDKR (166 aa)) are excised as a propeptide. 3 disulfide bridges follow: C191–C262, C269–C287, and C300–C360. The N-linked (GlcNAc...) asparagine glycan is linked to N205. A Zn(2+)-binding site is contributed by H311. E312 is an active-site residue. Positions 315 and 326 each coordinate Zn(2+).

The protein belongs to the peptidase M35 family. The cofactor is Zn(2+).

It localises to the secreted. It catalyses the reaction Preferential cleavage of bonds with hydrophobic residues in P1'. Also 3-Asn-|-Gln-4 and 8-Gly-|-Ser-9 bonds in insulin B chain.. Its function is as follows. Probable secreted metalloprotease that shows high activities on basic nuclear substrates such as histone and protamine. May be involved in virulence. The protein is Probable neutral protease 2 homolog A (NpII-A) of Trichophyton rubrum (Athlete's foot fungus).